The following is a 389-amino-acid chain: Succinate--CoA ligase [ADP-forming] subunit beta (389 aa).

Residues 9-244 (KQLLAEYGIP…KTQEDETEVT (236 aa)) enclose the ATP-grasp domain. ATP is bound by residues K46, 53–55 (GRG), G102, and E107. Mg(2+)-binding residues include N199 and D213. Residues N264 and 321–323 (GIV) each bind substrate.

The protein belongs to the succinate/malate CoA ligase beta subunit family. As to quaternary structure, heterotetramer of two alpha and two beta subunits. Mg(2+) serves as cofactor.

The enzyme catalyses succinate + ATP + CoA = succinyl-CoA + ADP + phosphate. The catalysed reaction is GTP + succinate + CoA = succinyl-CoA + GDP + phosphate. The protein operates within carbohydrate metabolism; tricarboxylic acid cycle; succinate from succinyl-CoA (ligase route): step 1/1. Its function is as follows. Succinyl-CoA synthetase functions in the citric acid cycle (TCA), coupling the hydrolysis of succinyl-CoA to the synthesis of either ATP or GTP and thus represents the only step of substrate-level phosphorylation in the TCA. The beta subunit provides nucleotide specificity of the enzyme and binds the substrate succinate, while the binding sites for coenzyme A and phosphate are found in the alpha subunit. The protein is Succinate--CoA ligase [ADP-forming] subunit beta of Xanthomonas oryzae pv. oryzae (strain MAFF 311018).